Consider the following 447-residue polypeptide: Trigger factor (447 aa).

The 88-residue stretch at 174 to 261 folds into the PPIase FKBP-type domain; it reads GDIAVLGFKG…LKDLKTRELP (88 aa).

This sequence belongs to the FKBP-type PPIase family. Tig subfamily.

The protein resides in the cytoplasm. The catalysed reaction is [protein]-peptidylproline (omega=180) = [protein]-peptidylproline (omega=0). Functionally, involved in protein export. Acts as a chaperone by maintaining the newly synthesized protein in an open conformation. Functions as a peptidyl-prolyl cis-trans isomerase. This chain is Trigger factor, found in Synechococcus sp. (strain CC9902).